We begin with the raw amino-acid sequence, 201 residues long: ATP-dependent Clp protease proteolytic subunit 2 (201 aa).

Residue Ser-98 is the Nucleophile of the active site. The active site involves His-123.

This sequence belongs to the peptidase S14 family. As to quaternary structure, fourteen ClpP subunits assemble into 2 heptameric rings which stack back to back to give a disk-like structure with a central cavity, resembling the structure of eukaryotic proteasomes.

It is found in the cytoplasm. The catalysed reaction is Hydrolysis of proteins to small peptides in the presence of ATP and magnesium. alpha-casein is the usual test substrate. In the absence of ATP, only oligopeptides shorter than five residues are hydrolyzed (such as succinyl-Leu-Tyr-|-NHMec, and Leu-Tyr-Leu-|-Tyr-Trp, in which cleavage of the -Tyr-|-Leu- and -Tyr-|-Trp bonds also occurs).. Functionally, cleaves peptides in various proteins in a process that requires ATP hydrolysis. Has a chymotrypsin-like activity. Plays a major role in the degradation of misfolded proteins. The sequence is that of ATP-dependent Clp protease proteolytic subunit 2 from Rhizobium johnstonii (strain DSM 114642 / LMG 32736 / 3841) (Rhizobium leguminosarum bv. viciae).